The following is a 315-amino-acid chain: NADH-ubiquinone oxidoreductase chain 1 (315 aa).

Transmembrane regions (helical) follow at residues 6 to 26 (FILSLIGSLLLIICVLVSVAF), 80 to 100 (ISPIFSLFLSLFVWMCMPFFV), 107 to 127 (LGGLFFLCCTSLGVYTVMIAG), 153 to 173 (LALILLSFVFLIGSYNMMYFF), 177 to 197 (IYIWFLIILFPMALVWLTISL), 229 to 249 (LIFMAEYASILFMSMLFCVIF), 253 to 273 (DVFNLLFYVKLTFISFVFIWA), and 292 to 312 (CFLSFSLNYLLFFIGFKILLF).

The protein belongs to the complex I subunit 1 family.

The protein resides in the mitochondrion inner membrane. The catalysed reaction is a ubiquinone + NADH + 5 H(+)(in) = a ubiquinol + NAD(+) + 4 H(+)(out). Its function is as follows. Core subunit of the mitochondrial membrane respiratory chain NADH dehydrogenase (Complex I) that is believed to belong to the minimal assembly required for catalysis. Complex I functions in the transfer of electrons from NADH to the respiratory chain. The immediate electron acceptor for the enzyme is believed to be ubiquinone. The sequence is that of NADH-ubiquinone oxidoreductase chain 1 (mt:ND1) from Drosophila persimilis (Fruit fly).